The following is a 551-amino-acid chain: Harmonin (551 aa).

Positions 1–86 (MDRKVAREFR…LTPRRSRKLK (86 aa)) are N-terminal domain. PDZ domains follow at residues 87 to 169 (EVRL…HIGL) and 211 to 293 (KVFI…AGAG). The mediates interaction with MYO7B stretch occupies residues 194-532 (GGRSSLGSPG…QKAWNQGDWI (339 aa)). Phosphoserine is present on serine 219. A coiled-coil region spans residues 318–377 (LMQKRLAMESNKILQEQQEMERQRKKEIAQKAAEENERYRKEMEQIVEEEEKFRKQWEED). A disordered region spans residues 401 to 425 (KPKYDLGVDPEFDPADDLDGGTNKR). Positions 408–419 (VDPEFDPADDLD) are enriched in acidic residues. Residues 452-536 (DVRLLRVKKE…NQGDWIDLVV (85 aa)) enclose the PDZ 3 domain.

Part of the IMAC/intermicrovillar adhesion complex/intermicrovillar tip-link complex composed of ANKS4B, MYO7B, USH1C, CDHR2 and CDHR5. Part of a complex composed of USH1C, USH1G and MYO7A. Interacts with F-actin. Interacts with USH2A. Interacts with SLC4A7. Interacts (via PDZ1 domain) with the C-terminus of USHBP1. Interacts (via N-terminus and PDZ 2 domain) with CDH23. Interacts with USH1G. Interacts with MYO7B. Interacts with CDHR2 and CDHR5; may mediate their interaction with MYO7B at the microvilli tip. Interacts (via PDZ 1 domain) with ANKS4B. Interacts (via PDZ 1 domain) with DOCK4.

Its subcellular location is the cytoplasm. It is found in the cytosol. It localises to the cytoskeleton. The protein resides in the cell projection. The protein localises to the microvillus. In terms of biological role, anchoring/scaffolding protein that is a part of the functional network formed by USH1C, USH1G, CDH23 and MYO7A that mediates mechanotransduction in cochlear hair cells. Required for normal development and maintenance of cochlear hair cell bundles. As part of the intermicrovillar adhesion complex/IMAC plays a role in brush border differentiation, controlling microvilli organization and length. Probably plays a central regulatory role in the assembly of the complex, recruiting CDHR2, CDHR5 and MYO7B to the microvilli tips. The protein is Harmonin (USH1C) of Bos taurus (Bovine).